A 538-amino-acid chain; its full sequence is Frizzled-4 (538 aa).

A signal peptide spans 1 to 37 (MAWQGTGPSVRGMPGGVRLRLGLLLLQLLLLQRPALG). Topologically, residues 38–213 (FGDEEERRCD…KCGYDAGLYS (176 aa)) are extracellular. The 122-residue stretch at 41–162 (EEERRCDPIR…NDHNHMCMEG (122 aa)) folds into the FZ domain. Disulfide bonds link Cys-46/Cys-107, Cys-54/Cys-100, Cys-91/Cys-129, Cys-118/Cys-159, Cys-122/Cys-146, Cys-182/Cys-201, Cys-205/Cys-283, and Cys-303/Cys-378. A glycan (N-linked (GlcNAc...) asparagine) is linked at Asn-60. N-linked (GlcNAc...) asparagine glycosylation is present at Asn-145. A helical transmembrane segment spans residues 214-244 (RSAKEFTDIWMAVWASLCFISTTFTVLTFLI). At 245 to 250 (DSSRFS) the chain is on the cytoplasmic side. Residues 251–276 (YPERPIIFLSMCYNIYSIAYIVRLTV) traverse the membrane as a helical segment. Over 277–300 (GRERISCDFEEAAEPVLIQEGLKN) the chain is Extracellular. Residues 301 to 334 (TGCAIIFLLMYFFGMASSIWWVILTLTWFLAAGL) form a helical membrane-spanning segment. Over 335-337 (KWG) the chain is Cytoplasmic. The helical transmembrane segment at 338 to 366 (HEAIEMHSSYFHIAAWAIPAVKTIVILIM) threads the bilayer. Residues 367–384 (RLVDADELTGLCYVGNQS) are Extracellular-facing. Asn-382 carries an N-linked (GlcNAc...) asparagine glycan. A helical membrane pass occupies residues 385–419 (LDALTGFVVAPLFTYLVIGTLFIAAGLVALFKIRS). The Cytoplasmic portion of the chain corresponds to 420–432 (NLQKDGTKTDKLE). The helical transmembrane segment at 433–461 (RLMVKIGVFSVLYTVPATCVIACYFYEIS) threads the bilayer. Residues 462-474 (NWALFRYSADDSN) are Extracellular-facing. The chain crosses the membrane as a helical span at residues 475–496 (MAVEMLKIFMSLLVGITSGMWI). Over 497–538 (WSAKTLHTWQKCSNRLVNSGKVKREKRGNGWVKPGKGNETVV) the chain is Cytoplasmic. Residues 500-505 (KTLHTW) carry the Lys-Thr-X-X-X-Trp motif, mediates interaction with the PDZ domain of Dvl family members motif. The short motif at 536-538 (TVV) is the PDZ-binding element.

This sequence belongs to the G-protein coupled receptor Fz/Smo family. Interacts with MAGI3 and NDP. Component of a complex, at least composed of TSPAN12, FZD4 and norrin (NDP). Interacts (via FZ domain) with TSKU; TSKU competes with WNT2B for binding to FZD4, inhibiting Wnt signaling and repressing peripheral eye development. Interacts with glypican GPC3. In terms of processing, ubiquitinated by ZNRF3, leading to its degradation by the proteasome.

It is found in the cell membrane. Receptor for Wnt proteins. Most of frizzled receptors are coupled to the beta-catenin (CTNNB1) canonical signaling pathway, which leads to the activation of disheveled proteins, inhibition of GSK-3 kinase, nuclear accumulation of beta-catenin (CTNNB1) and activation of Wnt target genes. Plays a critical role in retinal vascularization by acting as a receptor for Wnt proteins and norrin (NDP). In retina, it can be both activated by Wnt protein-binding, but also by a Wnt-independent signaling via binding of norrin (NDP), promoting in both cases beta-catenin (CTNNB1) accumulation and stimulation of LEF/TCF-mediated transcriptional programs. A second signaling pathway involving PKC and calcium fluxes has been seen for some family members, but it is not yet clear if it represents a distinct pathway or if it can be integrated in the canonical pathway, as PKC seems to be required for Wnt-mediated inactivation of GSK-3 kinase. Both pathways seem to involve interactions with G-proteins. May be involved in transduction and intercellular transmission of polarity information during tissue morphogenesis and/or in differentiated tissues. The sequence is that of Frizzled-4 (Fzd4) from Rattus norvegicus (Rat).